The chain runs to 499 residues: Bifunctional purine biosynthesis protein PurH (499 aa).

The MGS-like domain maps to 1-144; the sequence is MIKRALISVF…KNFKDVVVLT (144 aa).

Belongs to the PurH family.

The catalysed reaction is (6R)-10-formyltetrahydrofolate + 5-amino-1-(5-phospho-beta-D-ribosyl)imidazole-4-carboxamide = 5-formamido-1-(5-phospho-D-ribosyl)imidazole-4-carboxamide + (6S)-5,6,7,8-tetrahydrofolate. The enzyme catalyses IMP + H2O = 5-formamido-1-(5-phospho-D-ribosyl)imidazole-4-carboxamide. It functions in the pathway purine metabolism; IMP biosynthesis via de novo pathway; 5-formamido-1-(5-phospho-D-ribosyl)imidazole-4-carboxamide from 5-amino-1-(5-phospho-D-ribosyl)imidazole-4-carboxamide (10-formyl THF route): step 1/1. It participates in purine metabolism; IMP biosynthesis via de novo pathway; IMP from 5-formamido-1-(5-phospho-D-ribosyl)imidazole-4-carboxamide: step 1/1. The sequence is that of Bifunctional purine biosynthesis protein PurH from Clostridium botulinum (strain Loch Maree / Type A3).